Consider the following 1285-residue polypeptide: Replicase polyprotein 1TF (1285 aa).

A C4-type; atypical zinc finger spans residues 8–28; the sequence is CMCTPAARVFWNAGQVFCTRC. One can recognise a Peptidase C31 domain in the interval 69-180; it reads ECTPSGCCWL…QPFCPFEEAH (112 aa). Positions 69 to 182 are PCP1-alpha; it reads ECTPSGCCWL…FCPFEEAHSS (114 aa). Active-site for Nsp1-alpha papain-like cysteine proteinase activity residues include Cys-76 and His-146. The tract at residues 269–384 is PCP1-beta; that stretch reads PDVFDGKCWL…IFRFGAHKWY (116 aa). Positions 269–385 constitute a Peptidase C32 domain; sequence PDVFDGKCWL…FRFGAHKWYG (117 aa). Active-site for Nsp1-beta papain-like cysteine proteinase activity residues include Cys-276 and His-345. Disordered regions lie at residues 752–797 and 1050–1088; these read PSDP…DAGA and KPVG…SRVS. Over residues 775-790 the composition is skewed to polar residues; sequence APASTTTLVREQTPDN. 4 helical membrane-spanning segments follow: residues 1136-1156, 1170-1190, 1211-1231, and 1250-1270; these read LWLQ…CSVV, FLVL…LLLY, VMLS…AALW, and VISG…FLLF.

Its subcellular location is the host nucleus. It is found in the host cytoplasm. It localises to the host membrane. Functionally, inhibits host IFN-beta production. Plays a role in the degradation of the host transcriptional activator CREBBP protein. The degradation of host CREBBP which is a key component of the IFN enhanceosome is likely responsible for the inhibition of interferon mediated by Nsp1-alpha. Also participates in the inhibition of host NF-kappa-B activation. Plays a role in the inhibition of the interferon-activated JAK/STAT signal transduction by mediating the ubiquitination and subsequent proteasomal degradation of host KPNA1. In terms of biological role, plays a role in viral replication. This Porcine reproductive and respiratory syndrome virus (strain Lelystad) (PRRSV) protein is Replicase polyprotein 1TF.